Reading from the N-terminus, the 96-residue chain is Co-chaperonin GroES (96 aa).

This sequence belongs to the GroES chaperonin family. As to quaternary structure, heptamer of 7 subunits arranged in a ring. Interacts with the chaperonin GroEL.

The protein localises to the cytoplasm. Together with the chaperonin GroEL, plays an essential role in assisting protein folding. The GroEL-GroES system forms a nano-cage that allows encapsulation of the non-native substrate proteins and provides a physical environment optimized to promote and accelerate protein folding. GroES binds to the apical surface of the GroEL ring, thereby capping the opening of the GroEL channel. This chain is Co-chaperonin GroES, found in Nitrosococcus oceani (strain ATCC 19707 / BCRC 17464 / JCM 30415 / NCIMB 11848 / C-107).